Here is a 338-residue protein sequence, read N- to C-terminus: 4-hydroxy-3-methylbut-2-enyl diphosphate reductase (338 aa).

A [4Fe-4S] cluster-binding site is contributed by Cys21. Residues His50 and His83 each contribute to the (2E)-4-hydroxy-3-methylbut-2-enyl diphosphate site. Dimethylallyl diphosphate-binding residues include His50 and His83. The isopentenyl diphosphate site is built by His50 and His83. Cys105 is a binding site for [4Fe-4S] cluster. A (2E)-4-hydroxy-3-methylbut-2-enyl diphosphate-binding site is contributed by His133. His133 serves as a coordination point for dimethylallyl diphosphate. His133 provides a ligand contact to isopentenyl diphosphate. Glu135 serves as the catalytic Proton donor. A (2E)-4-hydroxy-3-methylbut-2-enyl diphosphate-binding site is contributed by Thr173. Cys203 serves as a coordination point for [4Fe-4S] cluster. 4 residues coordinate (2E)-4-hydroxy-3-methylbut-2-enyl diphosphate: Ser231, Ser232, Asn233, and Ser276. Dimethylallyl diphosphate is bound by residues Ser231, Ser232, Asn233, and Ser276. Isopentenyl diphosphate is bound by residues Ser231, Ser232, Asn233, and Ser276.

It belongs to the IspH family. It depends on [4Fe-4S] cluster as a cofactor.

It catalyses the reaction isopentenyl diphosphate + 2 oxidized [2Fe-2S]-[ferredoxin] + H2O = (2E)-4-hydroxy-3-methylbut-2-enyl diphosphate + 2 reduced [2Fe-2S]-[ferredoxin] + 2 H(+). The catalysed reaction is dimethylallyl diphosphate + 2 oxidized [2Fe-2S]-[ferredoxin] + H2O = (2E)-4-hydroxy-3-methylbut-2-enyl diphosphate + 2 reduced [2Fe-2S]-[ferredoxin] + 2 H(+). It participates in isoprenoid biosynthesis; dimethylallyl diphosphate biosynthesis; dimethylallyl diphosphate from (2E)-4-hydroxy-3-methylbutenyl diphosphate: step 1/1. Its pathway is isoprenoid biosynthesis; isopentenyl diphosphate biosynthesis via DXP pathway; isopentenyl diphosphate from 1-deoxy-D-xylulose 5-phosphate: step 6/6. Functionally, catalyzes the conversion of 1-hydroxy-2-methyl-2-(E)-butenyl 4-diphosphate (HMBPP) into a mixture of isopentenyl diphosphate (IPP) and dimethylallyl diphosphate (DMAPP). Acts in the terminal step of the DOXP/MEP pathway for isoprenoid precursor biosynthesis. The sequence is that of 4-hydroxy-3-methylbut-2-enyl diphosphate reductase from Streptomyces coelicolor (strain ATCC BAA-471 / A3(2) / M145).